The sequence spans 256 residues: 5-oxoprolinase subunit A (256 aa).

The protein belongs to the LamB/PxpA family. As to quaternary structure, forms a complex composed of PxpA, PxpB and PxpC.

It catalyses the reaction 5-oxo-L-proline + ATP + 2 H2O = L-glutamate + ADP + phosphate + H(+). In terms of biological role, catalyzes the cleavage of 5-oxoproline to form L-glutamate coupled to the hydrolysis of ATP to ADP and inorganic phosphate. The sequence is that of 5-oxoprolinase subunit A from Azoarcus sp. (strain BH72).